We begin with the raw amino-acid sequence, 237 residues long: tRNA (guanine-N(7)-)-methyltransferase (237 aa).

The S-adenosyl-L-methionine site is built by glutamate 67, glutamate 92, aspartate 119, and aspartate 141. Aspartate 141 is an active-site residue. Substrate is bound by residues lysine 145, aspartate 177, and 214–217 (TRYE).

This sequence belongs to the class I-like SAM-binding methyltransferase superfamily. TrmB family.

It carries out the reaction guanosine(46) in tRNA + S-adenosyl-L-methionine = N(7)-methylguanosine(46) in tRNA + S-adenosyl-L-homocysteine. The protein operates within tRNA modification; N(7)-methylguanine-tRNA biosynthesis. Its function is as follows. Catalyzes the formation of N(7)-methylguanine at position 46 (m7G46) in tRNA. This Ruegeria pomeroyi (strain ATCC 700808 / DSM 15171 / DSS-3) (Silicibacter pomeroyi) protein is tRNA (guanine-N(7)-)-methyltransferase.